The sequence spans 31 residues: Cytochrome b6-f complex subunit 6 (31 aa).

Residues 4–24 form a helical membrane-spanning segment; the sequence is ITSYFGFLLAALTITPALFIG.

It belongs to the PetL family. The 4 large subunits of the cytochrome b6-f complex are cytochrome b6, subunit IV (17 kDa polypeptide, PetD), cytochrome f and the Rieske protein, while the 4 small subunits are PetG, PetL, PetM and PetN. The complex functions as a dimer.

The protein localises to the plastid. Its subcellular location is the chloroplast thylakoid membrane. Component of the cytochrome b6-f complex, which mediates electron transfer between photosystem II (PSII) and photosystem I (PSI), cyclic electron flow around PSI, and state transitions. PetL is important for photoautotrophic growth as well as for electron transfer efficiency and stability of the cytochrome b6-f complex. This is Cytochrome b6-f complex subunit 6 from Saccharum barberi (Indian sugarcane).